A 242-amino-acid chain; its full sequence is uncharacterized protein (242 aa).

The S4 RNA-binding domain maps to 2–62 (EKAYKILSVQ…VEKPSVIFED (61 aa)). Asp93 is a catalytic residue.

This sequence belongs to the pseudouridine synthase RluA family.

The enzyme catalyses a uridine in RNA = a pseudouridine in RNA. This is an uncharacterized protein from Helicobacter pylori (strain ATCC 700392 / 26695) (Campylobacter pylori).